The following is a 320-amino-acid chain: G-protein coupled receptor homolog FPV021 (320 aa).

The Extracellular portion of the chain corresponds to 1 to 18 (MDTDYGTVHTQQSVKGNT). Residues 19–39 (LILLIYFISFIVGFPGNCTVI) form a helical membrane-spanning segment. Topologically, residues 40–52 (WFTGYRWKKSVTT) are cytoplasmic. Residues 53–73 (IWFLNLAIADTLFVIFIPFEI) traverse the membrane as a helical segment. The Extracellular portion of the chain corresponds to 74 to 91 (TYILMGHYWPFGLFVCRI). Cysteine 89 and cysteine 167 are oxidised to a cystine. The chain crosses the membrane as a helical span at residues 92–112 (GSLMFNTGMYASIFFLTFISI). Residues 113 to 133 (DRYCLAFRRDICNKYRYRINI) are Cytoplasmic-facing. The chain crosses the membrane as a helical span at residues 134–154 (MVMIIISWIISILLSTPYMYF). Over 155–188 (KNTNEKYRNNRDCLEDYHSDNNTYLLRRVVFCIS) the chain is Extracellular. Asparagine 175 carries N-linked (GlcNAc...) asparagine; by host glycosylation. Residues 189–209 (LVMRYLVPSVVMLFCYCLLLF) form a helical membrane-spanning segment. Topologically, residues 210–222 (KHSLFLSKGQTYT) are cytoplasmic. A helical transmembrane segment spans residues 223–243 (IVIMITSFMVLWTPYNILYFI). The Extracellular segment spans residues 244–260 (DVIGSHYYNADTIIDAA). Residues 261-281 (PISISLIFLSSSINPMIYMLV) traverse the membrane as a helical segment. Topologically, residues 282-320 (GRYVSFENYSMRESLKLILSEERDNQTNHENEIKMENIN) are cytoplasmic.

The protein belongs to the G-protein coupled receptor 1 family.

Its subcellular location is the host cell membrane. The chain is G-protein coupled receptor homolog FPV021 from Vertebrata (FPV).